Here is an 86-residue protein sequence, read N- to C-terminus: UPF0297 protein STH1998 (86 aa).

Belongs to the UPF0297 family.

This is UPF0297 protein STH1998 from Symbiobacterium thermophilum (strain DSM 24528 / JCM 14929 / IAM 14863 / T).